A 205-amino-acid chain; its full sequence is Putative 3-methyladenine DNA glycosylase (205 aa).

It belongs to the DNA glycosylase MPG family.

In Clostridium acetobutylicum (strain ATCC 824 / DSM 792 / JCM 1419 / IAM 19013 / LMG 5710 / NBRC 13948 / NRRL B-527 / VKM B-1787 / 2291 / W), this protein is Putative 3-methyladenine DNA glycosylase.